A 934-amino-acid polypeptide reads, in one-letter code: Protocadherin gamma-C3 (934 aa).

An N-terminal signal peptide occupies residues 1–31 (MVPEAWRSGLVSTGRVVGVLLLLGALNKAST). Cadherin domains follow at residues 32-135 (VIHY…NPAF), 136-244 (PTQE…APVF), 245-352 (NQSL…APEI), 353-457 (TVTS…PPQS), 458-567 (SQSS…APQV), and 572-685 (PGGS…APRE). Residues 32–693 (VIHYEIPEER…REQKKNLTFY (662 aa)) lie on the Extracellular side of the membrane. 6 N-linked (GlcNAc...) asparagine glycosylation sites follow: N245, N424, N478, N550, N615, and N689. Residues 694 to 714 (LLLSLILVSVGFVVTVFGVII) traverse the membrane as a helical segment. The Cytoplasmic segment spans residues 715–934 (FKVYKWKQSR…KKKSGKKEKK (220 aa)). Disordered regions lie at residues 804 to 843 (ESAPPGQQAPPNTDWRFSQAQRPGTSGSQNGDDTGTWPNN) and 904 to 934 (ATLTNAAGKRDGKAPAGGNGNKKKSGKKEKK). The span at 812–843 (APPNTDWRFSQAQRPGTSGSQNGDDTGTWPNN) shows a compositional bias: polar residues. Positions 924–934 (NKKKSGKKEKK) are enriched in basic residues.

It is found in the cell membrane. Its function is as follows. Potential calcium-dependent cell-adhesion protein. May be involved in the establishment and maintenance of specific neuronal connections in the brain. The sequence is that of Protocadherin gamma-C3 (PCDHGC3) from Homo sapiens (Human).